The chain runs to 308 residues: uncharacterized protein (308 aa).

Residues 15-81 (MRVDTGLARL…QNTPIDIEGM (67 aa)) enclose the S4 RNA-binding domain. Residue Asp139 is part of the active site.

Belongs to the pseudouridine synthase RluA family.

It catalyses the reaction a uridine in RNA = a pseudouridine in RNA. This is an uncharacterized protein from Mycobacterium tuberculosis (strain CDC 1551 / Oshkosh).